The chain runs to 352 residues: Nicotinate-nucleotide--dimethylbenzimidazole phosphoribosyltransferase (352 aa).

The active-site Proton acceptor is the Glu-316.

This sequence belongs to the CobT family.

It carries out the reaction 5,6-dimethylbenzimidazole + nicotinate beta-D-ribonucleotide = alpha-ribazole 5'-phosphate + nicotinate + H(+). The protein operates within nucleoside biosynthesis; alpha-ribazole biosynthesis; alpha-ribazole from 5,6-dimethylbenzimidazole: step 1/2. Its function is as follows. Catalyzes the synthesis of alpha-ribazole-5'-phosphate from nicotinate mononucleotide (NAMN) and 5,6-dimethylbenzimidazole (DMB). The sequence is that of Nicotinate-nucleotide--dimethylbenzimidazole phosphoribosyltransferase from Yersinia enterocolitica serotype O:8 / biotype 1B (strain NCTC 13174 / 8081).